A 158-amino-acid chain; its full sequence is Putative 8-oxo-dGTP diphosphatase YtkD (158 aa).

The Nudix hydrolase domain maps to 6 to 145 (DYYQNTVQLS…SFIMKDSVLP (140 aa)). A Nudix box motif is present at residues 53–74 (GKVEPMECAEEAALREVKEETG). The Mg(2+) site is built by Glu-68 and Glu-72.

Belongs to the Nudix hydrolase family. Requires Mg(2+) as cofactor.

It catalyses the reaction 8-oxo-dGTP + H2O = 8-oxo-dGMP + diphosphate + H(+). Its activity is regulated as follows. Not induced by oxidative damage (following treatment with paraquat or hydrogen peroxide). Not induced by mitomycin C. Not induced by sigma-B general stress inducers such as sodium chloride, ethanol or heat. Involved in the GO system responsible for removing an oxidatively damaged form of guanine (7,8-dihydro-8-oxoguanine, 8-oxo-dGTP) from DNA and the nucleotide pool. 8-oxo-dGTP is inserted opposite dA and dC residues of template DNA with almost equal efficiency thus leading to A.T to G.C transversions. Functions, in conjunction with MutT, to protect vegetatively growing cells from DNA-damaging agents such as H(2)O(2) or t-BHP (t-butylhydroperoxide). The 2 proteins do not however protect spores. According to PubMed:15576788, phosphohydrolase that catalyzes the hydrolysis of all common nucleoside triphosphates as well as of the mutagenic analog 8-oxo-dGTP. The high catalytic efficiency on dGTP is in contrast to results from PubMed:14761999. According to PubMed:14761999, catalyzes the hydrolysis of 8-oxo-dGTP with a specific activity 413 times higher than that exhibited against dGTP. Preferentially catalyzes the hydrolysis of 8-oxo-dGTP and 8-oxo-GTP. According to PubMed:15576788, hydrolyzes nucleoside triphosphates in a stepwise fashion through the diphosphate to the monophosphate, releasing two molecules of inorganic orthophosphate. The protein is Putative 8-oxo-dGTP diphosphatase YtkD (ytkD) of Bacillus subtilis (strain 168).